The primary structure comprises 178 residues: CDP-archaeol synthase (178 aa).

A run of 5 helical transmembrane segments spans residues 3 to 23, 56 to 76, 87 to 107, 123 to 145, and 150 to 169; these read LLLL…ANAV, FFGI…VILY, LFGY…GDML, APIL…FYPL, and IVLL…IIAY.

This sequence belongs to the CDP-archaeol synthase family. The cofactor is Mg(2+).

The protein resides in the cell membrane. The enzyme catalyses 2,3-bis-O-(geranylgeranyl)-sn-glycerol 1-phosphate + CTP + H(+) = CDP-2,3-bis-O-(geranylgeranyl)-sn-glycerol + diphosphate. It functions in the pathway membrane lipid metabolism; glycerophospholipid metabolism. Functionally, catalyzes the formation of CDP-2,3-bis-(O-geranylgeranyl)-sn-glycerol (CDP-archaeol) from 2,3-bis-(O-geranylgeranyl)-sn-glycerol 1-phosphate (DGGGP) and CTP. This reaction is the third ether-bond-formation step in the biosynthesis of archaeal membrane lipids. In Methanococcus maripaludis (strain C6 / ATCC BAA-1332), this protein is CDP-archaeol synthase.